The chain runs to 278 residues: Envelope glycoprotein L (278 aa).

The first 30 residues, 1–30, serve as a signal peptide directing secretion; the sequence is MCRRPDCGFSFSPGPVILLWCCLLLPIVSS. One can recognise a gL betaherpesvirus-type domain in the interval 43 to 256; the sequence is VPAECPELTR…DKYYAGLPPE (214 aa). A disulfide bridge connects residues cysteine 154 and cysteine 159.

This sequence belongs to the herpesviridae glycoprotein L (gL) family. Betaherpesvirinae gL subfamily. In terms of assembly, interacts with glycoprotein H (gH); this interaction is necessary for the correct processing and cell surface expression of gH. Forms the envelope pentamer complex (PC) composed of gH, gL, UL128, UL130, and UL131A. The pentamer interacts with host NRP2. Forms the envelope trimer complex composed of gH, gL, and gO. The trimer interacts with host PDGFRA. The trimer also interacts with host EPHA2.

The protein localises to the virion membrane. It localises to the host cell membrane. It is found in the host Golgi apparatus. Its subcellular location is the host trans-Golgi network. The heterodimer glycoprotein H-glycoprotein L is required for the fusion of viral and plasma membranes leading to virus entry into the host cell. Acts as a functional inhibitor of gH and maintains gH in an inhibited form. Upon binding to host integrins, gL dissociates from gH leading to activation of the viral fusion glycoproteins gB and gH. In human cytomegalovirus, forms two distincts complexes to mediate viral entry, a trimer and a pentamer at the surface of the virion envelope. The gH-gL-gO trimer is required for infection in fibroblasts by interacting with host PDGFRA, and in glioblastoma cells by interacting with host EPHA2. The gH-gL-UL128-UL130-UL131A pentamer is essential for viral entry in epithelial, endothelial and myeloid cells via interaction with host NRP2. The polypeptide is Envelope glycoprotein L (Human cytomegalovirus (strain 5035) (HHV-5)).